The sequence spans 182 residues: Inner membrane-spanning protein YciB (182 aa).

The next 5 membrane-spanning stretches (helical) occupy residues 22 to 42 (IYIA…VTYA), 50 to 70 (MHLI…IFHD), 72 to 92 (AFIK…LAVS), 118 to 138 (VTWY…YVAF), and 148 to 168 (FKVF…VVYL).

It belongs to the YciB family.

It localises to the cell inner membrane. In terms of biological role, plays a role in cell envelope biogenesis, maintenance of cell envelope integrity and membrane homeostasis. This chain is Inner membrane-spanning protein YciB, found in Shewanella woodyi (strain ATCC 51908 / MS32).